The chain runs to 239 residues: Ribonuclease PH (239 aa).

Residues Arg86 and 124–126 contribute to the phosphate site; that span reads GTR.

It belongs to the RNase PH family. As to quaternary structure, homohexameric ring arranged as a trimer of dimers.

The catalysed reaction is tRNA(n+1) + phosphate = tRNA(n) + a ribonucleoside 5'-diphosphate. Its function is as follows. Phosphorolytic 3'-5' exoribonuclease that plays an important role in tRNA 3'-end maturation. Removes nucleotide residues following the 3'-CCA terminus of tRNAs; can also add nucleotides to the ends of RNA molecules by using nucleoside diphosphates as substrates, but this may not be physiologically important. Probably plays a role in initiation of 16S rRNA degradation (leading to ribosome degradation) during starvation. In Marinomonas sp. (strain MWYL1), this protein is Ribonuclease PH.